The chain runs to 440 residues: 6-phospho-alpha-glucosidase (440 aa).

4-70 (FSIVVAGGGS…PDINFVYTTD (67 aa)) is a binding site for NAD(+). Substrate contacts are provided by R93 and N147. Residue C169 participates in Mn(2+) binding. Catalysis depends on D170, which acts as the Proton donor. H200 is a Mn(2+) binding site. Y263 (proton acceptor) is an active-site residue. R283 is a substrate binding site.

Belongs to the glycosyl hydrolase 4 family. In terms of assembly, homodimer. It depends on NAD(+) as a cofactor. Requires Mn(2+) as cofactor.

It participates in glycan degradation; palatinose degradation. Functionally, in vitro, readily hydrolyzes p-nitrophenyl-alpha-D-glucopyranoside 6-phosphate (pNPalphaG6P), a chromogenic analog of the phosphorylated isomers of sucrose. In vivo, is probably involved in the degradation of the 6-phosphate derivatives of the sucrose isomers trehalulose, turanose, maltulose and palatinose, catalyzing their hydrolysis into glucose 6-phosphate (G6P) and fructose, which allows the bacterium to use these sugars as energy sources for growth. Is not able to hydrolyze the C2 or C4 chromogenic stereomers (i.e. pNPalpha-mannopyranoside-6P and pNPalpha-galactopyranoside-6P, respectively). This Leptotrichia buccalis (strain ATCC 14201 / DSM 1135 / JCM 12969 / NCTC 10249 / C-1013-b) protein is 6-phospho-alpha-glucosidase (pagL).